The following is an 864-amino-acid chain: Leucine--tRNA ligase (864 aa).

A 'HIGH' region motif is present at residues 42–52; that stretch reads PYPSGKLHMGH. The 'KMSKS' region signature appears at 624-628; the sequence is KMSKS. Lys627 serves as a coordination point for ATP.

The protein belongs to the class-I aminoacyl-tRNA synthetase family.

Its subcellular location is the cytoplasm. It catalyses the reaction tRNA(Leu) + L-leucine + ATP = L-leucyl-tRNA(Leu) + AMP + diphosphate. The protein is Leucine--tRNA ligase of Burkholderia mallei (strain ATCC 23344).